The sequence spans 478 residues: MTNIVTRFAPSPTGFLHIGGARTALFNYLFARHHKGKFLLRIEDTDAARSTEEYKISIIDSLKWLKINWDNDIFYQSANLQRHVNIALELVKSGKAYYCFTSPEEIDLQRQLAITQKQSFIFRSPWRNNIPSSLSLKNNNKAYVIRFKAPDYGTTIINDHVQGEVVFQNQQIDDMILVRSDGTPTYMLAVVVDDHDMGITHIIRGDDHLTNAAKQIALYDALGWAAPAMVHIPLIYGPDGTKLSKRHGAIGVDAYQKMGYLPEALCNYLLRLGWSYQDEEIISHERAIKLFDIDGLGGKSAARLDFDKMLYLNGYYIRSTDNSILAKLVIEILSKQYILSNESCNLIQKGMSGLKSRANLLTDLAENAKIYVLESQLTFINEALNIIQKTPSMLITEVIDIINNLQELNCESVKQALTEFAKTKKMKLGQLMDPIRALLTGNTKSPSIFEVIPILGKIHTIKRLAGIKAIKSNNQTLV.

The 'HIGH' region motif lies at 10–20 (PSPTGFLHIGG). The 'KMSKS' region motif lies at 242-246 (KLSKR). An ATP-binding site is contributed by lysine 245.

It belongs to the class-I aminoacyl-tRNA synthetase family. Glutamate--tRNA ligase type 1 subfamily. In terms of assembly, monomer.

It is found in the cytoplasm. The catalysed reaction is tRNA(Glu) + L-glutamate + ATP = L-glutamyl-tRNA(Glu) + AMP + diphosphate. Its function is as follows. Catalyzes the attachment of glutamate to tRNA(Glu) in a two-step reaction: glutamate is first activated by ATP to form Glu-AMP and then transferred to the acceptor end of tRNA(Glu). The sequence is that of Glutamate--tRNA ligase 1 from Orientia tsutsugamushi (strain Boryong) (Rickettsia tsutsugamushi).